We begin with the raw amino-acid sequence, 91 residues long: ATP synthase subunit c (91 aa).

A run of 2 helical transmembrane segments spans residues 4–24 (LTMC…GTGI) and 53–73 (IGLA…LIIL).

Belongs to the ATPase C chain family. F-type ATPases have 2 components, F(1) - the catalytic core - and F(0) - the membrane proton channel. F(1) has five subunits: alpha(3), beta(3), gamma(1), delta(1), epsilon(1). F(0) has three main subunits: a(1), b(2) and c(10-14). The alpha and beta chains form an alternating ring which encloses part of the gamma chain. F(1) is attached to F(0) by a central stalk formed by the gamma and epsilon chains, while a peripheral stalk is formed by the delta and b chains.

The protein resides in the cell inner membrane. Functionally, f(1)F(0) ATP synthase produces ATP from ADP in the presence of a proton or sodium gradient. F-type ATPases consist of two structural domains, F(1) containing the extramembraneous catalytic core and F(0) containing the membrane proton channel, linked together by a central stalk and a peripheral stalk. During catalysis, ATP synthesis in the catalytic domain of F(1) is coupled via a rotary mechanism of the central stalk subunits to proton translocation. Key component of the F(0) channel; it plays a direct role in translocation across the membrane. A homomeric c-ring of between 10-14 subunits forms the central stalk rotor element with the F(1) delta and epsilon subunits. This chain is ATP synthase subunit c, found in Geobacter metallireducens (strain ATCC 53774 / DSM 7210 / GS-15).